Consider the following 468-residue polypeptide: 6-phosphogluconate dehydrogenase, decarboxylating (468 aa).

Residues 10-15 (GMAVMG), 33-35 (NRS), 74-76 (VKA), and Asn-102 contribute to the NADP(+) site. Residues Asn-102 and 128–130 (SGG) contribute to the substrate site. Residue Lys-183 is the Proton acceptor of the active site. A substrate-binding site is contributed by 186–187 (HN). The active-site Proton donor is the Glu-190. Residues Tyr-191, Lys-260, Arg-287, Arg-445, and His-451 each coordinate substrate.

Belongs to the 6-phosphogluconate dehydrogenase family. Homodimer.

The enzyme catalyses 6-phospho-D-gluconate + NADP(+) = D-ribulose 5-phosphate + CO2 + NADPH. It functions in the pathway carbohydrate degradation; pentose phosphate pathway; D-ribulose 5-phosphate from D-glucose 6-phosphate (oxidative stage): step 3/3. Its function is as follows. Catalyzes the oxidative decarboxylation of 6-phosphogluconate to ribulose 5-phosphate and CO(2), with concomitant reduction of NADP to NADPH. This is 6-phosphogluconate dehydrogenase, decarboxylating (gnd) from Escherichia coli (strain K12).